The primary structure comprises 383 residues: Probable cell wall hydrolase LytN (383 aa).

A signal peptide spans 1-49; the sequence is MFVYYCKECFIMNKQQSKVRYSIRKVSIGILSISIGMFLALGMSNKAYA. Positions 175–219 constitute a LysM domain; the sequence is QIYTVKKGDTLSAIALKYKTTVSNIQNTNNIANPNLIFIGQKLKV. The region spanning 241 to 378 is the Peptidase C51 domain; the sequence is NSSTLNYLKT…NYENDMIFIR (138 aa).

The protein resides in the secreted. Functionally, probably involved in peptidoglycan hydrolysis. The sequence is that of Probable cell wall hydrolase LytN (lytN) from Staphylococcus aureus (strain NCTC 8325 / PS 47).